The sequence spans 470 residues: Uronate isomerase (470 aa).

This sequence belongs to the metallo-dependent hydrolases superfamily. Uronate isomerase family.

The catalysed reaction is D-glucuronate = D-fructuronate. It carries out the reaction aldehydo-D-galacturonate = keto-D-tagaturonate. The protein operates within carbohydrate metabolism; pentose and glucuronate interconversion. This is Uronate isomerase from Klebsiella pneumoniae (strain 342).